Reading from the N-terminus, the 821-residue chain is ATP-dependent Clp protease ATP-binding subunit ClpA homolog (821 aa).

The Clp R domain occupies 2–144; it reads FERFTEKAIK…RAEVIQMLGE (143 aa). 2 repeat regions span residues 5–70 and 80–144; these read FTEK…IGRG and FTPR…MLGE. Residues 210 to 217 and 549 to 556 each bind ATP; these read GEPGVGKT and GPTGVGKT.

It belongs to the ClpA/ClpB family.

The protein resides in the plastid. Its subcellular location is the chloroplast. Functionally, may interact with a ClpP-like protease involved in degradation of denatured proteins in the chloroplast. The sequence is that of ATP-dependent Clp protease ATP-binding subunit ClpA homolog (clpC) from Porphyra purpurea (Red seaweed).